We begin with the raw amino-acid sequence, 810 residues long: Phenylalanine--tRNA ligase beta subunit (810 aa).

The tRNA-binding domain maps to 39–154 (APPTEKIVVG…EGTPVGQDIR (116 aa)). A B5 domain is found at 405–480 (PQRAPVSMRA…RIYGFEKIPA (76 aa)). D458, D464, E467, and E468 together coordinate Mg(2+). One can recognise an FDX-ACB domain in the interval 707 to 809 (SKFPPVRRDI…MARVYGARLR (103 aa)).

Belongs to the phenylalanyl-tRNA synthetase beta subunit family. Type 1 subfamily. As to quaternary structure, tetramer of two alpha and two beta subunits. The cofactor is Mg(2+).

The protein resides in the cytoplasm. The enzyme catalyses tRNA(Phe) + L-phenylalanine + ATP = L-phenylalanyl-tRNA(Phe) + AMP + diphosphate + H(+). This is Phenylalanine--tRNA ligase beta subunit from Burkholderia mallei (strain ATCC 23344).